Here is a 385-residue protein sequence, read N- to C-terminus: UPF0284 protein PMT9312_0438 (385 aa).

The protein belongs to the UPF0284 family.

In Prochlorococcus marinus (strain MIT 9312), this protein is UPF0284 protein PMT9312_0438.